The sequence spans 348 residues: Protein DMR6-LIKE OXYGENASE 2 (348 aa).

Residues 194-294 (KHGQHMAINY…RISIPTFYCP (101 aa)) enclose the Fe2OG dioxygenase domain. Positions 219, 221, and 275 each coordinate Fe cation. Arginine 285 contributes to the 2-oxoglutarate binding site.

It belongs to the iron/ascorbate-dependent oxidoreductase family. The cofactor is Fe(2+).

The catalysed reaction is salicylate + NADH + O2 + H(+) = 2,3-dihydroxybenzoate + NAD(+) + H2O. In terms of biological role, converts salicylic acid (SA) to 2,3-dihydroxybenzoic acid (2,3-DHBA). Negative regulator of defense against Hyaloperonospora arabidopsidis. (Microbial infection) Confers susceptibility to the downy mildew pathogen Hyaloperonospora arabidopsidis. In Arabidopsis thaliana (Mouse-ear cress), this protein is Protein DMR6-LIKE OXYGENASE 2.